A 179-amino-acid polypeptide reads, in one-letter code: Large ribosomal subunit protein uL5 (179 aa).

The protein belongs to the universal ribosomal protein uL5 family. As to quaternary structure, part of the 50S ribosomal subunit; part of the 5S rRNA/L5/L18/L25 subcomplex. Contacts the 5S rRNA and the P site tRNA. Forms a bridge to the 30S subunit in the 70S ribosome.

In terms of biological role, this is one of the proteins that bind and probably mediate the attachment of the 5S RNA into the large ribosomal subunit, where it forms part of the central protuberance. In the 70S ribosome it contacts protein S13 of the 30S subunit (bridge B1b), connecting the 2 subunits; this bridge is implicated in subunit movement. Contacts the P site tRNA; the 5S rRNA and some of its associated proteins might help stabilize positioning of ribosome-bound tRNAs. The polypeptide is Large ribosomal subunit protein uL5 (Synechococcus elongatus (strain ATCC 33912 / PCC 7942 / FACHB-805) (Anacystis nidulans R2)).